The following is a 322-amino-acid chain: Large ribosomal subunit protein uL29m (322 aa).

The segment at 1 to 44 (MLNVQRGLHTTVRLSARTKYTKPKPKPQARVIKSEPSQVTHHDN) is disordered.

This sequence belongs to the universal ribosomal protein uL29 family. As to quaternary structure, component of the mitochondrial large ribosomal subunit. Mature mitochondrial ribosomes consist of a small (37S) and a large (54S) subunit. The 37S subunit contains at least 33 different proteins and 1 molecule of RNA (15S). The 54S subunit contains at least 45 different proteins and 1 molecule of RNA (21S).

Its subcellular location is the mitochondrion. The polypeptide is Large ribosomal subunit protein uL29m (MRPL4) (Vanderwaltozyma polyspora (strain ATCC 22028 / DSM 70294 / BCRC 21397 / CBS 2163 / NBRC 10782 / NRRL Y-8283 / UCD 57-17) (Kluyveromyces polysporus)).